A 309-amino-acid polypeptide reads, in one-letter code: Protein FdhE (309 aa).

Belongs to the FdhE family.

Its subcellular location is the cytoplasm. In terms of biological role, necessary for formate dehydrogenase activity. In Salmonella choleraesuis (strain SC-B67), this protein is Protein FdhE.